We begin with the raw amino-acid sequence, 121 residues long: Large ribosomal subunit protein uL18 (121 aa).

It belongs to the universal ribosomal protein uL18 family. Part of the 50S ribosomal subunit; part of the 5S rRNA/L5/L18/L25 subcomplex. Contacts the 5S and 23S rRNAs.

In terms of biological role, this is one of the proteins that bind and probably mediate the attachment of the 5S RNA into the large ribosomal subunit, where it forms part of the central protuberance. This Geobacter metallireducens (strain ATCC 53774 / DSM 7210 / GS-15) protein is Large ribosomal subunit protein uL18.